A 38-amino-acid polypeptide reads, in one-letter code: Photosystem II reaction center protein L (38 aa).

Residues 17-37 (SLFWGLLLIFVLAVLFSSYFF) form a helical membrane-spanning segment.

Belongs to the PsbL family. As to quaternary structure, PSII is composed of 1 copy each of membrane proteins PsbA, PsbB, PsbC, PsbD, PsbE, PsbF, PsbH, PsbI, PsbJ, PsbK, PsbL, PsbM, PsbT, PsbX, PsbY, PsbZ, Psb30/Ycf12, at least 3 peripheral proteins of the oxygen-evolving complex and a large number of cofactors. It forms dimeric complexes.

The protein resides in the plastid. The protein localises to the chloroplast thylakoid membrane. One of the components of the core complex of photosystem II (PSII). PSII is a light-driven water:plastoquinone oxidoreductase that uses light energy to abstract electrons from H(2)O, generating O(2) and a proton gradient subsequently used for ATP formation. It consists of a core antenna complex that captures photons, and an electron transfer chain that converts photonic excitation into a charge separation. This subunit is found at the monomer-monomer interface and is required for correct PSII assembly and/or dimerization. The polypeptide is Photosystem II reaction center protein L (Rhodomonas salina (Cryptomonas salina)).